We begin with the raw amino-acid sequence, 282 residues long: uncharacterized protein (282 aa).

This sequence to M.tuberculosis Rv2161c and Rv3079c.

This is an uncharacterized protein from Mycobacterium tuberculosis (strain CDC 1551 / Oshkosh).